Reading from the N-terminus, the 277-residue chain is Putative hydro-lyase SCO1412 (277 aa).

Belongs to the D-glutamate cyclase family.

The protein is Putative hydro-lyase SCO1412 of Streptomyces coelicolor (strain ATCC BAA-471 / A3(2) / M145).